The chain runs to 214 residues: Dephospho-CoA kinase (214 aa).

A DPCK domain is found at 3 to 202 (KIGLTGGIGS…DRWLALAGAA (200 aa)). 11–16 (GSGKSR) lines the ATP pocket.

Belongs to the CoaE family.

The protein resides in the cytoplasm. It carries out the reaction 3'-dephospho-CoA + ATP = ADP + CoA + H(+). It participates in cofactor biosynthesis; coenzyme A biosynthesis; CoA from (R)-pantothenate: step 5/5. Functionally, catalyzes the phosphorylation of the 3'-hydroxyl group of dephosphocoenzyme A to form coenzyme A. This Bordetella pertussis (strain Tohama I / ATCC BAA-589 / NCTC 13251) protein is Dephospho-CoA kinase.